A 310-amino-acid chain; its full sequence is UDP-N-acetylenolpyruvoylglucosamine reductase (310 aa).

One can recognise an FAD-binding PCMH-type domain in the interval 31–216 (KIGGPADYFV…LRKIEELNQA (186 aa)). Arg180 is an active-site residue. Ser230 acts as the Proton donor in catalysis. Glu300 is a catalytic residue.

Belongs to the MurB family. It depends on FAD as a cofactor.

Its subcellular location is the cytoplasm. It catalyses the reaction UDP-N-acetyl-alpha-D-muramate + NADP(+) = UDP-N-acetyl-3-O-(1-carboxyvinyl)-alpha-D-glucosamine + NADPH + H(+). The protein operates within cell wall biogenesis; peptidoglycan biosynthesis. Cell wall formation. This Lachnoclostridium phytofermentans (strain ATCC 700394 / DSM 18823 / ISDg) (Clostridium phytofermentans) protein is UDP-N-acetylenolpyruvoylglucosamine reductase.